The primary structure comprises 973 residues: Putative helicase 022R (973 aa).

Positions 473–502 (AKARGGRDSGNEDDEEDSATDEDDSNPWDS) are disordered. Residues 483–498 (NEDDEEDSATDEDDSN) are compositionally biased toward acidic residues. Residues 658-840 (GPVTKLLAFF…FVTPGTTAPA (183 aa)) form the SF3 helicase domain. 702 to 709 (GTGNNGKT) is an ATP binding site.

The protein is Putative helicase 022R of Frog virus 3 (isolate Goorha) (FV-3).